The chain runs to 75 residues: MHTCPRCDSKKGEVMSKSPVEGAWEVYQCQTCFFTWRSCEPESITNPEKYNPAFKIDPKETETAIEVPAVPERKA.

Its function is as follows. Involved in the non-oxidative decarboxylation and detoxification of phenolic derivatives under both aerobic and anaerobic conditions, however the precise biochemical function of BsdD in metabolism of phenolic acid is unknown. The polypeptide is Protein BsdD (Bacillus subtilis (strain 168)).